The following is a 171-amino-acid chain: Superoxide dismutase [Cu-Zn] 2 (171 aa).

Positions 1–20 are cleaved as a signal peptide; sequence MKKLSGVLAGSLLLISASFS. His-67, His-69, and His-85 together coordinate Cu cation. A disulfide bridge links Cys-74 with Cys-167. Zn(2+) is bound by residues His-85, His-93, His-102, and Asp-105. Residue His-147 participates in Cu cation binding.

The protein belongs to the Cu-Zn superoxide dismutase family. Cu cation is required as a cofactor. Requires Zn(2+) as cofactor.

The enzyme catalyses 2 superoxide + 2 H(+) = H2O2 + O2. Destroys radicals which are normally produced within the cells and which are toxic to biological systems. This chain is Superoxide dismutase [Cu-Zn] 2 (sodC2), found in Aquifex aeolicus (strain VF5).